The following is a 613-amino-acid chain: Zinc metalloproteinase-disintegrin-like EoVMP2 (613 aa).

Residues methionine 1–serine 20 form the signal peptide. The propeptide occupies isoleucine 21–glutamate 194. Glutamine 195 carries the pyrrolidone carboxylic acid modification. Residues arginine 201–proline 397 enclose the Peptidase M12B domain. Position 204 (glutamate 204) interacts with Ca(2+). A glycan (N-linked (GlcNAc...) asparagine) is linked at asparagine 219. Ca(2+) is bound at residue aspartate 288. 3 disulfide bridges follow: cysteine 312/cysteine 392, cysteine 352/cysteine 376, and cysteine 354/cysteine 359. Position 337 (histidine 337) interacts with Zn(2+). Glutamate 338 is a catalytic residue. Zn(2+) contacts are provided by histidine 341 and histidine 347. Asparagine 375 is a glycosylation site (N-linked (GlcNAc...) asparagine). Positions 392, 395, 407, 410, 412, 414, 417, and 420 each coordinate Ca(2+). The Disintegrin domain occupies proline 405 to asparagine 491. 14 disulfide bridges follow: cysteine 408/cysteine 437, cysteine 419/cysteine 432, cysteine 421/cysteine 427, cysteine 431/cysteine 454, cysteine 445/cysteine 451, cysteine 450/cysteine 476, cysteine 463/cysteine 483, cysteine 470/cysteine 502, cysteine 495/cysteine 507, cysteine 514/cysteine 564, cysteine 529/cysteine 575, cysteine 542/cysteine 552, cysteine 559/cysteine 601, and cysteine 595/cysteine 606. The D/ECD-tripeptide motif lies at aspartate 469–aspartate 471.

It belongs to the venom metalloproteinase (M12B) family. P-III subfamily. P-IIIa sub-subfamily. As to quaternary structure, monomer. Zn(2+) serves as cofactor. As to expression, expressed by the venom gland.

The protein localises to the secreted. In terms of biological role, snake venom zinc metalloprotease that possesses high hemorrhagic activity. It inhibits collagen-induced platelet aggregation and activates prothrombin (F2). This is Zinc metalloproteinase-disintegrin-like EoVMP2 (Svmp3-Eoc22) from Echis ocellatus (Ocellated saw-scaled viper).